The chain runs to 533 residues: Na(+)/H(+) antiporter NhaB (533 aa).

11 helical membrane passes run Ile-10–Ile-30, Pro-67–Leu-87, Val-96–Phe-116, Val-131–Ile-165, Leu-209–Pro-229, Ile-247–Val-267, Ala-310–Ile-330, Glu-355–Ile-375, Leu-396–Gly-416, Ala-454–Ile-474, and Ala-485–Leu-505.

It belongs to the NhaB Na(+)/H(+) (TC 2.A.34) antiporter family.

The protein localises to the cell inner membrane. The catalysed reaction is 2 Na(+)(in) + 3 H(+)(out) = 2 Na(+)(out) + 3 H(+)(in). Functionally, na(+)/H(+) antiporter that extrudes sodium in exchange for external protons. This chain is Na(+)/H(+) antiporter NhaB, found in Shewanella oneidensis (strain ATCC 700550 / JCM 31522 / CIP 106686 / LMG 19005 / NCIMB 14063 / MR-1).